The following is a 199-amino-acid chain: Cytochrome b (199 aa).

4 consecutive transmembrane segments (helical) span residues 1 to 8 (LTGLFLAM), 32 to 53 (WLIRNLHANGASFFFICIYFHI), 68 to 88 (WNIGVVLLLLVMMTAFVGYVL), and 133 to 153 (FFAFHFLFPFVILAMTILHLL). The heme b site is built by His38 and His52. Residues His137 and His151 each coordinate heme b. A ubiquinone is bound at residue His156. Residues 181-199 (YKDLLGFAILLVALASLAH) traverse the membrane as a helical segment.

This sequence belongs to the cytochrome b family. As to quaternary structure, the cytochrome bc1 complex contains 3 respiratory subunits (MT-CYB, CYC1 and UQCRFS1), 2 core proteins (UQCRC1 and UQCRC2) and probably 6 low-molecular weight proteins. Heme b serves as cofactor.

The protein localises to the mitochondrion inner membrane. Its function is as follows. Component of the ubiquinol-cytochrome c reductase complex (complex III or cytochrome b-c1 complex) that is part of the mitochondrial respiratory chain. The b-c1 complex mediates electron transfer from ubiquinol to cytochrome c. Contributes to the generation of a proton gradient across the mitochondrial membrane that is then used for ATP synthesis. This chain is Cytochrome b (mt-cyb), found in Sarda chiliensis (Pacific bonito).